The primary structure comprises 305 residues: Polyamine aminopropyltransferase 2 (305 aa).

In terms of domain architecture, PABS spans 7–242 (WRFVAEWTSE…GLWGFVAASD (236 aa)). S-methyl-5'-thioadenosine is bound at residue glutamine 36. Spermidine is bound by residues histidine 67 and glutamate 91. S-methyl-5'-thioadenosine is bound by residues aspartate 111 and 143–144 (DG). Residue aspartate 161 is the Proton acceptor of the active site. Proline 170 contacts S-methyl-5'-thioadenosine.

Belongs to the spermidine/spermine synthase family. As to quaternary structure, homodimer or homotetramer.

The protein resides in the cytoplasm. It carries out the reaction S-adenosyl 3-(methylsulfanyl)propylamine + propane-1,3-diamine = norspermidine + S-methyl-5'-thioadenosine + H(+). In terms of biological role, involved in the biosynthesis of polyamines which are thought to support the growth of thermophilic microorganisms under high-temperature conditions. It seems that long-chain and branched-chain of polyamines effectively stabilize DNA and RNA, respectively. Catalyzes the irreversible transfer of a propylamine group from the amino donor S-adenosylmethioninamine (decarboxy-AdoMet) to 1,3-diaminopropane to yield sym-norspermidine (bis(3-aminopropyl)amine). It can also synthesize thermospermine from spermidine with a very low activity. The polypeptide is Polyamine aminopropyltransferase 2 (Hyperthermus butylicus (strain DSM 5456 / JCM 9403 / PLM1-5)).